The primary structure comprises 156 residues: MGLEKSLVFFPLLVLLALGWVQPCLGRESSAHKFRRQHMDSEGLSSSSSSPTYCNQMMQRRKLTRGHCKPVNTFVHEPLADVQAVCFQENVTCKNGQTNCYRSGSSMHVTDCRTTGSSKYPNCAYRTTQKVKRIVVACEGDPSVPVHYDGSVEDST.

Residues 1–26 (MGLEKSLVFFPLLVLLALGWVQPCLG) form the signal peptide. Positions 33 and 36 each coordinate substrate. The Proton acceptor role is filled by His-38. Intrachain disulfides connect Cys-54–Cys-112, Cys-68–Cys-123, Cys-86–Cys-138, and Cys-93–Cys-100. 69–73 (KPVNT) provides a ligand contact to substrate. A glycan (N-linked (GlcNAc...) asparagine) is linked at Asn-90. Substrate-binding residues include Lys-94 and Arg-113. Residue His-147 is the Proton donor of the active site.

Belongs to the pancreatic ribonuclease family. In terms of assembly, monomer. Interacts with and forms tight 1:1 complexes with RNH1. Dimerization of two such complexes may occur. Interaction with RNH1 inhibits this protein. Pancreas.

It localises to the secreted. It carries out the reaction an [RNA] containing cytidine + H2O = an [RNA]-3'-cytidine-3'-phosphate + a 5'-hydroxy-ribonucleotide-3'-[RNA].. The enzyme catalyses an [RNA] containing uridine + H2O = an [RNA]-3'-uridine-3'-phosphate + a 5'-hydroxy-ribonucleotide-3'-[RNA].. Endonuclease that catalyzes the cleavage of RNA on the 3' side of pyrimidine nucleotides. Acts on single-stranded and double-stranded RNA. The protein is Ribonuclease pancreatic (RNASE1) of Glis glis (Fat dormouse).